The sequence spans 1168 residues: Transcription-repair-coupling factor (1168 aa).

Residues Asp633–Ile794 form the Helicase ATP-binding domain. Gly646–Thr653 is a binding site for ATP. Positions Asp747–Gln750 match the DEEQ box motif. Residues Val808–Asn969 form the Helicase C-terminal domain.

The protein in the N-terminal section; belongs to the UvrB family. In the C-terminal section; belongs to the helicase family. RecG subfamily.

Its subcellular location is the cytoplasm. Couples transcription and DNA repair by recognizing RNA polymerase (RNAP) stalled at DNA lesions. Mediates ATP-dependent release of RNAP and its truncated transcript from the DNA, and recruitment of nucleotide excision repair machinery to the damaged site. The polypeptide is Transcription-repair-coupling factor (Staphylococcus aureus (strain USA300)).